A 477-amino-acid chain; its full sequence is RNA pseudouridine synthase 4, mitochondrial (477 aa).

The N-terminal 43 residues, 1–43 (MAKWRLATATLRRQLQSSSPTISTFKNPTKALSAAAHQSTRSY), are a transit peptide targeting the mitochondrion. The disordered stretch occupies residues 34 to 55 (AAAHQSTRSYSTTQTDDSRGKW). Residues 36-48 (AHQSTRSYSTTQT) are compositionally biased toward polar residues. One can recognise an S4 RNA-binding domain in the interval 90 to 175 (TTALRWILRC…AKKESFQCSD (86 aa)). The active site involves Asp-236.

It belongs to the pseudouridine synthase RluA family.

It localises to the mitochondrion. The catalysed reaction is a uridine in RNA = a pseudouridine in RNA. This chain is RNA pseudouridine synthase 4, mitochondrial, found in Arabidopsis thaliana (Mouse-ear cress).